We begin with the raw amino-acid sequence, 469 residues long: Lipase A (469 aa).

Residues 1-22 (MMFLTQLVSALFLFFLGPISYG) form the signal peptide. Over residues 40-51 (PSEDPFYQPPPG) the composition is skewed to pro residues. The interval 40 to 59 (PSEDPFYQPPPGYEETEPGT) is disordered. An N-linked (GlcNAc...) asparagine glycan is attached at Asn111. The cysteines at positions 129 and 304 are disulfide-linked. Active-site charge relay system residues include Ser217, Asp361, and His393. Cys377 and Cys421 are disulfide-bonded.

This sequence belongs to the AB hydrolase superfamily. Lipase family. Class Lip subfamily. Monomer.

It is found in the secreted. The enzyme catalyses a triacylglycerol + H2O = a diacylglycerol + a fatty acid + H(+). Hydrolyzes triglycerides, with a preference for substrates with short-chain lengths (C4 to C8). The chain is Lipase A from Arthroderma benhamiae (strain ATCC MYA-4681 / CBS 112371) (Trichophyton mentagrophytes).